We begin with the raw amino-acid sequence, 78 residues long: Large ribosomal subunit protein bL28 (78 aa).

The interval 1–30 is disordered; that stretch reads MAAHCQVTGAQPGFGHSISHSHRRTKRRWN. Positions 19 to 30 are enriched in basic residues; it reads SHSHRRTKRRWN.

Belongs to the bacterial ribosomal protein bL28 family.

The sequence is that of Large ribosomal subunit protein bL28 from Kocuria rhizophila (strain ATCC 9341 / DSM 348 / NBRC 103217 / DC2201).